We begin with the raw amino-acid sequence, 567 residues long: Oxygen-dependent choline dehydrogenase (567 aa).

4-33 (DYIIIGAGSAGNVLAARLTEDADVTVLLLE) lines the FAD pocket. His-473 acts as the Proton acceptor in catalysis.

The protein belongs to the GMC oxidoreductase family. It depends on FAD as a cofactor.

It carries out the reaction choline + A = betaine aldehyde + AH2. The enzyme catalyses betaine aldehyde + NAD(+) + H2O = glycine betaine + NADH + 2 H(+). It participates in amine and polyamine biosynthesis; betaine biosynthesis via choline pathway; betaine aldehyde from choline (cytochrome c reductase route): step 1/1. Functionally, involved in the biosynthesis of the osmoprotectant glycine betaine. Catalyzes the oxidation of choline to betaine aldehyde and betaine aldehyde to glycine betaine at the same rate. The sequence is that of Oxygen-dependent choline dehydrogenase from Yersinia pestis (strain Pestoides F).